A 219-amino-acid chain; its full sequence is tRNA (guanine-N(7)-)-methyltransferase (219 aa).

The S-adenosyl-L-methionine site is built by Glu46, Glu71, Asp100, and Asp122. The active site involves Asp122. Lys126 provides a ligand contact to substrate. The segment at 128-133 (KHEKRR) is interaction with RNA. Substrate contacts are provided by residues Asp158 and 199–202 (TEYE).

The protein belongs to the class I-like SAM-binding methyltransferase superfamily. TrmB family.

It carries out the reaction guanosine(46) in tRNA + S-adenosyl-L-methionine = N(7)-methylguanosine(46) in tRNA + S-adenosyl-L-homocysteine. The protein operates within tRNA modification; N(7)-methylguanine-tRNA biosynthesis. Functionally, catalyzes the formation of N(7)-methylguanine at position 46 (m7G46) in tRNA. The chain is tRNA (guanine-N(7)-)-methyltransferase from Oenococcus oeni (strain ATCC BAA-331 / PSU-1).